The following is a 297-amino-acid chain: Large ribosomal subunit protein uL24m (297 aa).

N-acetylserine is present on Ser2. Residues 63 to 96 (FIPGDRVVVMSGASKGNIAVIKSFDKRTNSFILD) enclose the KOW domain.

It belongs to the universal ribosomal protein uL24 family. As to quaternary structure, component of the mitochondrial large ribosomal subunit (mt-LSU). Mature yeast 74S mitochondrial ribosomes consist of a small (37S) and a large (54S) subunit. The 37S small subunit contains a 15S ribosomal RNA (15S mt-rRNA) and 34 different proteins. The 54S large subunit contains a 21S rRNA (21S mt-rRNA) and 46 different proteins. uL24m forms the wall of the exit tunnel.

The protein resides in the mitochondrion. Its function is as follows. Component of the mitochondrial ribosome (mitoribosome), a dedicated translation machinery responsible for the synthesis of mitochondrial genome-encoded proteins, including at least some of the essential transmembrane subunits of the mitochondrial respiratory chain. The mitoribosomes are attached to the mitochondrial inner membrane and translation products are cotranslationally integrated into the membrane. This Saccharomyces cerevisiae (strain ATCC 204508 / S288c) (Baker's yeast) protein is Large ribosomal subunit protein uL24m (MRPL40).